The primary structure comprises 874 residues: Alanine--tRNA ligase (874 aa).

Residues His-562, His-566, Cys-665, and His-669 each contribute to the Zn(2+) site.

Belongs to the class-II aminoacyl-tRNA synthetase family. Zn(2+) is required as a cofactor.

It is found in the cytoplasm. It catalyses the reaction tRNA(Ala) + L-alanine + ATP = L-alanyl-tRNA(Ala) + AMP + diphosphate. Catalyzes the attachment of alanine to tRNA(Ala) in a two-step reaction: alanine is first activated by ATP to form Ala-AMP and then transferred to the acceptor end of tRNA(Ala). Also edits incorrectly charged Ser-tRNA(Ala) and Gly-tRNA(Ala) via its editing domain. This Stutzerimonas stutzeri (strain A1501) (Pseudomonas stutzeri) protein is Alanine--tRNA ligase.